We begin with the raw amino-acid sequence, 376 residues long: Chaperone protein DnaJ (376 aa).

One can recognise a J domain in the interval 5 to 70 (DYYEVLGVGR…DKKAAYDQFG (66 aa)). Residues 132 to 210 (GLTKELKVPT…CHGNGRVEKT (79 aa)) form a CR-type zinc finger. Positions 145, 148, 162, 165, 184, 187, 198, and 201 each coordinate Zn(2+). CXXCXGXG motif repeat units follow at residues 145–152 (CDSCDGSG), 162–169 (CGTCHGMG), 184–191 (CPTCHGRG), and 198–205 (CSKCHGNG).

This sequence belongs to the DnaJ family. Homodimer. Requires Zn(2+) as cofactor.

It localises to the cytoplasm. In terms of biological role, participates actively in the response to hyperosmotic and heat shock by preventing the aggregation of stress-denatured proteins and by disaggregating proteins, also in an autonomous, DnaK-independent fashion. Unfolded proteins bind initially to DnaJ; upon interaction with the DnaJ-bound protein, DnaK hydrolyzes its bound ATP, resulting in the formation of a stable complex. GrpE releases ADP from DnaK; ATP binding to DnaK triggers the release of the substrate protein, thus completing the reaction cycle. Several rounds of ATP-dependent interactions between DnaJ, DnaK and GrpE are required for fully efficient folding. Also involved, together with DnaK and GrpE, in the DNA replication of plasmids through activation of initiation proteins. This chain is Chaperone protein DnaJ, found in Shewanella amazonensis (strain ATCC BAA-1098 / SB2B).